A 212-amino-acid polypeptide reads, in one-letter code: Peroxisomal membrane protein 4 (212 aa).

2 helical membrane-spanning segments follow: residues 97 to 117 (GGTH…LLFG) and 151 to 171 (LKWD…LWLF). Asparagine 206 carries N-linked (GlcNAc...) asparagine glycosylation.

This sequence belongs to the peroxisomal membrane protein PXMP2/4 family. As to quaternary structure, interacts with PEX19. In terms of tissue distribution, liver.

It localises to the peroxisome membrane. In Rattus norvegicus (Rat), this protein is Peroxisomal membrane protein 4 (Pxmp4).